The primary structure comprises 268 residues: Elongation factor Ts (268 aa).

The interval 81 to 84 (TDFV) is involved in Mg(2+) ion dislocation from EF-Tu.

This sequence belongs to the EF-Ts family.

The protein resides in the cytoplasm. Associates with the EF-Tu.GDP complex and induces the exchange of GDP to GTP. It remains bound to the aminoacyl-tRNA.EF-Tu.GTP complex up to the GTP hydrolysis stage on the ribosome. This Buchnera aphidicola subsp. Acyrthosiphon pisum (strain 5A) protein is Elongation factor Ts.